Consider the following 403-residue polypeptide: Na(+)/H(+) antiporter NhaA (403 aa).

Helical transmembrane passes span 23-43, 66-86, 101-121, 132-152, 161-181, 184-204, 219-239, 257-277, 297-317, 333-353, and 363-383; these read AFFLLLASLAGFVLANSPWAA, VAAWVSDGLMTLFFLVVILEI, VALPLIGAVGGMVVPALTYLL, GWAIPVATDAAFTLPIILALG, AWLMALAIFDDVLGIVVIALF, GSMYWPALLAVVLVTAALIGA, GILLWTALLDSGLHPTLAGVI, WVSSAVTPLVTWIVLPLFGFM, LGIMLGLMLGKPVGVFGATLL, GMLFGLSLLCGIGFTISLFVA, and IAPAKMGIFAGSALSALTGWF.

This sequence belongs to the NhaA Na(+)/H(+) (TC 2.A.33) antiporter family.

Its subcellular location is the cell inner membrane. It catalyses the reaction Na(+)(in) + 2 H(+)(out) = Na(+)(out) + 2 H(+)(in). Its function is as follows. Na(+)/H(+) antiporter that extrudes sodium in exchange for external protons. The protein is Na(+)/H(+) antiporter NhaA of Gluconobacter oxydans (strain 621H) (Gluconobacter suboxydans).